Consider the following 799-residue polypeptide: Sodium- and chloride-dependent glycine transporter 2 (799 aa).

Positions M1–F64 are disordered. Residues M1–D201 lie on the Cytoplasmic side of the membrane. Low complexity predominate over residues P40 to A57. S58 carries the phosphoserine modification. T59 carries the post-translational modification Phosphothreonine. Residue S86 is modified to Phosphoserine. The next 3 helical transmembrane spans lie at F202–L222, A230–L249, and G273–I293. Residues G208, A210, V211, and N215 each coordinate Na(+). Residues C294–R395 are Extracellular-facing. C313 and C322 are disulfide-bonded. 4 N-linked (GlcNAc...) asparagine glycosylation sites follow: N345, N355, N360, and N366. Helical transmembrane passes span W396–A414, V423–I440, I476–Y493, L505–I526, and L559–L578. S479, N511, L576, and D579 together coordinate Na(+). Helical transmembrane passes span V606–T624, S640–L660, V681–Y700, and L719–I737. Over K738–C799 the chain is Cytoplasmic.

The protein belongs to the sodium:neurotransmitter symporter (SNF) (TC 2.A.22) family. SLC6A5 subfamily. N-glycosylated. Specifically expressed in spinal cord, brain stem, and to a lesser extent in the cerebellum.

It localises to the cell membrane. It catalyses the reaction glycine(out) + chloride(out) + 3 Na(+)(out) = glycine(in) + chloride(in) + 3 Na(+)(in). Sodium- and chloride-dependent glycine transporter. Terminates the action of glycine by its high affinity sodium-dependent reuptake into presynaptic terminals. May be responsible for the termination of neurotransmission at strychnine-sensitive glycinergic synapses. The chain is Sodium- and chloride-dependent glycine transporter 2 (Slc6a5) from Rattus norvegicus (Rat).